The primary structure comprises 999 residues: Sarcoplasmic/endoplasmic reticulum calcium ATPase 3 (999 aa).

The residue at position 1 (Met1) is an N-acetylmethionine. At 1–48 (MEEAHLLPAADVLRRFSVTAEGGLSPAQVTRARERYGPNELPTEEGKS) the chain is on the cytoplasmic side. Ser17 bears the Phosphoserine mark. Thr19 is subject to Phosphothreonine. Ser25 carries the phosphoserine modification. Residues 49–69 (LWELVLEQFEDLLVRILLLAA) form a helical membrane-spanning segment. At 70–89 (LVSFVLACFEEGEETTTAFV) the chain is on the extracellular side. Residues 90 to 110 (EPLVIVLILVANAVVGVWQER) form a helical membrane-spanning segment. Residues 111-253 (NAENAIEALK…PERTPLQQKL (143 aa)) lie on the Cytoplasmic side of the membrane. The helical transmembrane segment at 254–273 (DEFGRQLSRAISVICMAVWV) threads the bilayer. Over 274-295 (INIGHFADPAHGGSWLRGAVYY) the chain is Extracellular. The helical transmembrane segment at 296 to 313 (FKIAVALAVAAIPEGLPA) threads the bilayer. Ca(2+) is bound by residues Val304, Ala305, Ile307, and Glu309. Topologically, residues 314–757 (VITTCLALGT…EEGRAIYSNM (444 aa)) are cytoplasmic. Asp351 acts as the 4-aspartylphosphate intermediate in catalysis. Mg(2+) is bound by residues Asp351 and Thr353. Position 353 (Thr353) interacts with ATP. The tract at residues 370–400 (AEAEAGTCRLHEFTISGTTYAPEGEVRQGEQ) is interaction with phospholamban 1. Thr415 carries the phosphothreonine modification. Positions 442, 489, 515, 560, 625, 626, and 627 each coordinate ATP. Ser662 bears the Phosphoserine mark. Residues Arg678 and Lys684 each coordinate ATP. Residue Asp703 coordinates Mg(2+). Residue Asn706 coordinates ATP. A helical transmembrane segment spans residues 758-777 (KQFIRYLISSNVGEVVCIFL). 2 residues coordinate Ca(2+): Asn768 and Glu771. Over 778–787 (TAILGLPEAL) the chain is Extracellular. A helical transmembrane segment spans residues 788–808 (IPVQLLWVNLVTDGLPATALG). Residues 788–808 (IPVQLLWVNLVTDGLPATALG) form an interaction with phospholamban 2 region. Ca(2+) is bound by residues Asn796, Thr799, and Asp800. Residues 809–828 (FNPPDLDIMEKRPRNPREAL) lie on the Cytoplasmic side of the membrane. Residues 829–851 (ISGWLFFRYLAIGVYVGLATVAA) form a helical membrane-spanning segment. The Extracellular segment spans residues 852–897 (ATWWFLYDAEGPQVTFYQLRNFLKCSEDNPLFTGTDCEVFESRFPT). A disulfide bond links Cys876 and Cys888. Residues 898–917 (TMALSVLVTTEMCNALNSVS) form a helical membrane-spanning segment. Glu908 lines the Ca(2+) pocket. At 918-930 (ENQSLLRMPPWLN) the chain is on the cytoplasmic side. Residues 931-949 (PWLLAAVAMSMALHFLILL) form a helical membrane-spanning segment. The Extracellular segment spans residues 950–964 (VPPLPLIFQVTPLSG). The chain crosses the membrane as a helical span at residues 965–985 (RQWVVVLQISLPVILLDEALK). Residues 986–999 (YLSRKHVDEEKGRQ) are Cytoplasmic-facing.

It belongs to the cation transport ATPase (P-type) (TC 3.A.3) family. Type IIA subfamily. Interacts with sarcolipin (SLN). Interacts with phospholamban (PLN). Interacts with myoregulin (MRLN). Interacts with DWORF. Interacts with VMP1. Interacts with TUNAR; the interaction occurs at low levels in low glucose conditions and is increased by high glucose levels. Requires Mg(2+) as cofactor. In terms of tissue distribution, expressed in endothelial tissues.

It localises to the endoplasmic reticulum membrane. The protein localises to the sarcoplasmic reticulum membrane. It carries out the reaction Ca(2+)(in) + ATP + H2O = Ca(2+)(out) + ADP + phosphate + H(+). With respect to regulation, inhibited by sarcolipin (SLN), phospholamban (PLN) and myoregulin (MRLN). Enhanced by DWORF; DWORF increases activity by displacing sarcolipin (SLN), phospholamban (PLN) and myoregulin (MRLN). Functionally, this magnesium-dependent enzyme catalyzes the hydrolysis of ATP coupled with the transport of calcium. Transports calcium ions from the cytosol into the sarcoplasmic/endoplasmic reticulum lumen. Contributes to calcium sequestration involved in muscular excitation/contraction. This is Sarcoplasmic/endoplasmic reticulum calcium ATPase 3 (ATP2A3) from Sus scrofa (Pig).